The sequence spans 407 residues: Carbamoyl phosphate synthase small chain (407 aa).

A CPSase region spans residues 1 to 203 (MSQNESGTIA…EPCGEYEGKE (203 aa)). Positions 61, 255, and 257 each coordinate L-glutamine. Positions 207–405 (TVAAVDLGIK…CELMKNNSKE (199 aa)) constitute a Glutamine amidotransferase type-1 domain. Cysteine 283 (nucleophile) is an active-site residue. L-glutamine is bound by residues phenylalanine 284, glutamine 287, asparagine 325, glycine 327, and phenylalanine 328. Residues histidine 378 and glutamate 380 contribute to the active site.

This sequence belongs to the CarA family. In terms of assembly, composed of two chains; the small (or glutamine) chain promotes the hydrolysis of glutamine to ammonia, which is used by the large (or ammonia) chain to synthesize carbamoyl phosphate. Tetramer of heterodimers (alpha,beta)4.

The catalysed reaction is hydrogencarbonate + L-glutamine + 2 ATP + H2O = carbamoyl phosphate + L-glutamate + 2 ADP + phosphate + 2 H(+). The enzyme catalyses L-glutamine + H2O = L-glutamate + NH4(+). It participates in amino-acid biosynthesis; L-arginine biosynthesis; carbamoyl phosphate from bicarbonate: step 1/1. It functions in the pathway pyrimidine metabolism; UMP biosynthesis via de novo pathway; (S)-dihydroorotate from bicarbonate: step 1/3. In terms of biological role, small subunit of the glutamine-dependent carbamoyl phosphate synthetase (CPSase). CPSase catalyzes the formation of carbamoyl phosphate from the ammonia moiety of glutamine, carbonate, and phosphate donated by ATP, constituting the first step of 2 biosynthetic pathways, one leading to arginine and/or urea and the other to pyrimidine nucleotides. The small subunit (glutamine amidotransferase) binds and cleaves glutamine to supply the large subunit with the substrate ammonia. This is Carbamoyl phosphate synthase small chain from Bifidobacterium longum (strain DJO10A).